The chain runs to 263 residues: tRNA (guanine-N(1)-)-methyltransferase (263 aa).

S-adenosyl-L-methionine contacts are provided by residues glycine 113 and 137–142 (LGDYVL).

This sequence belongs to the RNA methyltransferase TrmD family. Homodimer.

It localises to the cytoplasm. It catalyses the reaction guanosine(37) in tRNA + S-adenosyl-L-methionine = N(1)-methylguanosine(37) in tRNA + S-adenosyl-L-homocysteine + H(+). Its function is as follows. Specifically methylates guanosine-37 in various tRNAs. This Renibacterium salmoninarum (strain ATCC 33209 / DSM 20767 / JCM 11484 / NBRC 15589 / NCIMB 2235) protein is tRNA (guanine-N(1)-)-methyltransferase.